A 231-amino-acid polypeptide reads, in one-letter code: Ion-translocating oxidoreductase complex subunit E (231 aa).

Helical transmembrane passes span 18–38 (ALVQLLGLCPLLAVTSTATNA), 39–59 (LGLGLATTLVLTLTNLTISTL), 63–83 (TPAEIRIPIYVMIIASVVSAV), 86–106 (LINAYAFGLYQSLGIFIPLIV), 125–145 (ALSALDGFSIGMGATCAMFVL), and 182–202 (PFLLAMLPPSAFIGLGLMLAG).

This sequence belongs to the NqrDE/RnfAE family. In terms of assembly, the complex is composed of six subunits: RsxA, RsxB, RsxC, RsxD, RsxE and RsxG.

The protein resides in the cell inner membrane. Functionally, part of a membrane-bound complex that couples electron transfer with translocation of ions across the membrane. Required to maintain the reduced state of SoxR. This Escherichia coli O7:K1 (strain IAI39 / ExPEC) protein is Ion-translocating oxidoreductase complex subunit E.